Consider the following 492-residue polypeptide: Phosphatidylinositol-glycan biosynthesis class W protein (492 aa).

Transmembrane regions (helical) follow at residues 26 to 46, 59 to 79, 82 to 102, 127 to 147, and 156 to 176; these read FILT…ATFF, FILE…FTEL, FLIV…QKNV, YRAF…FQVF, and TYGI…GALV. Residues 185 to 216 are disordered; it reads IEKQQKKKREEEEDDNDKINKTSSSSSSSSSA. N-linked (GlcNAc...) asparagine glycosylation occurs at N204. The span at 205–216 shows a compositional bias: low complexity; the sequence is KTSSSSSSSSSA. The helical transmembrane segment at 264 to 284 threads the bilayer; the sequence is YGLHWNFFFTLGFVSISLAFL. N289 carries an N-linked (GlcNAc...) asparagine glycan. 4 consecutive transmembrane segments (helical) span residues 290–310, 331–351, 364–384, and 399–419; these read ISAI…NSFG, ICSF…GTEL, FATK…LCEI, and VLAI…ITLI. N-linked (GlcNAc...) asparagine glycosylation is present at N424. 2 helical membrane-spanning segments follow: residues 437–457 and 464–484; these read LFIF…MKTI and SMII…ILDY.

Belongs to the PIGW family.

It localises to the endoplasmic reticulum membrane. It participates in glycolipid biosynthesis; glycosylphosphatidylinositol-anchor biosynthesis. Functionally, probable acetyltransferase, which acetylates the inositol ring of phosphatidylinositol during biosynthesis of GPI-anchor. This chain is Phosphatidylinositol-glycan biosynthesis class W protein, found in Dictyostelium discoideum (Social amoeba).